Reading from the N-terminus, the 185-residue chain is Homeobox expressed in ES cells 1 (185 aa).

A DNA-binding region (homeobox) is located at residues 108-167 (GRRPRTAFTQNQIEVLENVFRVNCYPGIDIREDLAQKLNLEEDRIQIWFQNRRAKLKRSH).

It belongs to the ANF homeobox family. In terms of assembly, can form heterodimers with PROP1 in binding to DNA. Interacts with TLE1.

The protein resides in the nucleus. In terms of biological role, required for the normal development of the forebrain, eyes and other anterior structures such as the olfactory placodes and pituitary gland. Possible transcriptional repressor. Binds to the palindromic PIII sequence, 5'-AGCTTGAGTCTAATTGAATTAACTGTAC-3'. HESX1 and PROP1 bind as heterodimers on this palindromic site, and, in vitro, HESX1 can antagonize PROP1 activation. This is Homeobox expressed in ES cells 1 (HESX1) from Pan paniscus (Pygmy chimpanzee).